The primary structure comprises 248 residues: Cell division protein FtsQ (248 aa).

The Cytoplasmic segment spans residues 1-4 (MGTR). The helical transmembrane segment at 5–25 (LRALLGVLILLVLGGAGWLFL) threads the bilayer. The Periplasmic segment spans residues 26–248 (RWEPTLLPIR…RVAARAGNRR (223 aa)). In terms of domain architecture, POTRA spans 32–101 (LPIRLIQIEG…DTLRVQVREY (70 aa)).

This sequence belongs to the FtsQ/DivIB family. FtsQ subfamily. Part of a complex composed of FtsB, FtsL and FtsQ.

The protein localises to the cell inner membrane. In terms of biological role, essential cell division protein. May link together the upstream cell division proteins, which are predominantly cytoplasmic, with the downstream cell division proteins, which are predominantly periplasmic. May control correct divisome assembly. The protein is Cell division protein FtsQ of Allochromatium vinosum (strain ATCC 17899 / DSM 180 / NBRC 103801 / NCIMB 10441 / D) (Chromatium vinosum).